We begin with the raw amino-acid sequence, 478 residues long: Multidrug resistance outer membrane protein MdtQ (478 aa).

The first 21 residues, 1–21 (MNRDSFYPAIACFPLLLMLAG), serve as a signal peptide directing secretion. Cysteine 22 carries N-palmitoyl cysteine lipidation. Cysteine 22 carries S-diacylglycerol cysteine lipidation.

Belongs to the outer membrane factor (OMF) (TC 1.B.17) family.

The protein localises to the cell outer membrane. Functionally, could be involved in resistance to puromycin, acriflavine and tetraphenylarsonium chloride. This Escherichia coli O6:H1 (strain CFT073 / ATCC 700928 / UPEC) protein is Multidrug resistance outer membrane protein MdtQ (mdtQ).